A 220-amino-acid chain; its full sequence is Inner membrane-spanning protein YciB (220 aa).

6 helical membrane passes run 20-40, 57-77, 86-106, 123-143, 156-176, and 187-207; these read EVPP…FFFA, IGAP…IALA, LPIM…LTLW, LFGA…GYVF, KLTL…EVVW, and FKVW…MPLI.

Belongs to the YciB family.

It is found in the cell inner membrane. In terms of biological role, plays a role in cell envelope biogenesis, maintenance of cell envelope integrity and membrane homeostasis. The sequence is that of Inner membrane-spanning protein YciB from Brucella anthropi (strain ATCC 49188 / DSM 6882 / CCUG 24695 / JCM 21032 / LMG 3331 / NBRC 15819 / NCTC 12168 / Alc 37) (Ochrobactrum anthropi).